Consider the following 471-residue polypeptide: 6-phosphogluconate dehydrogenase, decarboxylating (471 aa).

Residues 10–15 (GLAVMG), 33–35 (NRT), 75–77 (VKA), and asparagine 103 each bind NADP(+). Substrate contacts are provided by residues asparagine 103 and 129–131 (SGG). Lysine 183 acts as the Proton acceptor in catalysis. 186–187 (HN) contacts substrate. The active-site Proton donor is glutamate 190. Tyrosine 191, lysine 263, arginine 290, arginine 449, and histidine 455 together coordinate substrate.

This sequence belongs to the 6-phosphogluconate dehydrogenase family. Homodimer.

It carries out the reaction 6-phospho-D-gluconate + NADP(+) = D-ribulose 5-phosphate + CO2 + NADPH. It participates in carbohydrate degradation; pentose phosphate pathway; D-ribulose 5-phosphate from D-glucose 6-phosphate (oxidative stage): step 3/3. Catalyzes the oxidative decarboxylation of 6-phosphogluconate to ribulose 5-phosphate and CO(2), with concomitant reduction of NADP to NADPH. The protein is 6-phosphogluconate dehydrogenase, decarboxylating (gnd) of Synechococcus elongatus (strain ATCC 33912 / PCC 7942 / FACHB-805) (Anacystis nidulans R2).